An 87-amino-acid polypeptide reads, in one-letter code: Small ribosomal subunit protein bS16 (87 aa).

This sequence belongs to the bacterial ribosomal protein bS16 family.

This Desulfatibacillum aliphaticivorans protein is Small ribosomal subunit protein bS16.